The following is a 171-amino-acid chain: CASP-like protein 1C3 (171 aa).

Over 1–6 (MVKPKR) the chain is Cytoplasmic. A helical membrane pass occupies residues 7–27 (LLSLLLRLIAFGATLAAVIIM). The Extracellular portion of the chain corresponds to 28 to 52 (ATSHEKGSFFALSYEAKYSDTPAFK). The chain crosses the membrane as a helical span at residues 53-73 (YFVIANAIVTVYGFLALFIPS). Residues 74-79 (ESPLWR) are Cytoplasmic-facing. A helical membrane pass occupies residues 80-100 (LVLALDLVFTMLLISSISAAL). Topologically, residues 101-130 (AVAQVGKKGNSSAGWLPVCGQVTKYCNQVT) are extracellular. Asparagine 110 is a glycosylation site (N-linked (GlcNAc...) asparagine). The chain crosses the membrane as a helical span at residues 131–151 (GALVAGFIAIITYIILLLYSI). Residues 152-171 (YTFLNSLLGKTPCRLSSPGI) lie on the Cytoplasmic side of the membrane.

The protein belongs to the Casparian strip membrane proteins (CASP) family. Homodimer and heterodimers.

Its subcellular location is the cell membrane. This is CASP-like protein 1C3 from Populus trichocarpa (Western balsam poplar).